A 539-amino-acid polypeptide reads, in one-letter code: Dihydrolipoyllysine-residue acetyltransferase component 2 of pyruvate dehydrogenase complex, mitochondrial (539 aa).

The transit peptide at 1-102 (MASRIINHSK…SSQMRSVRGF (102 aa)) directs the protein to the mitochondrion. The disordered stretch occupies residues 102–122 (FSSSSDLPPHQEIGMPSLSPT). The Lipoyl-binding domain maps to 111–187 (HQEIGMPSLS…QVGEVIAITV (77 aa)). Lys-152 is subject to N6-lipoyllysine. The interval 196–244 (FKDYTPSSDTGPAAPEAKPAPSLPKEEKVEKPASAPEAKISKPSSAPSE) is disordered. A Peripheral subunit-binding (PSBD) domain is found at 248 to 285 (FASPLARKLAEDNNVPLSSIKGTGPEGRIVKADVEDFL). Active-site residues include His-512 and Asp-516.

The protein belongs to the 2-oxoacid dehydrogenase family. The cofactor is (R)-lipoate.

The protein resides in the mitochondrion matrix. The enzyme catalyses N(6)-[(R)-dihydrolipoyl]-L-lysyl-[protein] + acetyl-CoA = N(6)-[(R)-S(8)-acetyldihydrolipoyl]-L-lysyl-[protein] + CoA. Functionally, the pyruvate dehydrogenase complex catalyzes the overall conversion of pyruvate to acetyl-CoA and CO(2). It contains multiple copies of three enzymatic components: pyruvate dehydrogenase (E1), dihydrolipoamide acetyltransferase (E2) and lipoamide dehydrogenase (E3). The chain is Dihydrolipoyllysine-residue acetyltransferase component 2 of pyruvate dehydrogenase complex, mitochondrial from Arabidopsis thaliana (Mouse-ear cress).